We begin with the raw amino-acid sequence, 446 residues long: Glycogen synthase (446 aa).

ADP-alpha-D-glucose is bound at residue R15.

This sequence belongs to the glycosyltransferase 1 family. Bacterial/plant glycogen synthase subfamily.

It carries out the reaction [(1-&gt;4)-alpha-D-glucosyl](n) + ADP-alpha-D-glucose = [(1-&gt;4)-alpha-D-glucosyl](n+1) + ADP + H(+). Its pathway is glycan biosynthesis; glycogen biosynthesis. Its function is as follows. Synthesizes alpha-1,4-glucan chains using ADP-glucose. In Deinococcus deserti (strain DSM 17065 / CIP 109153 / LMG 22923 / VCD115), this protein is Glycogen synthase.